The primary structure comprises 79 residues: Short neurotoxin 8 (79 aa).

Residues 1 to 21 form the signal peptide; that stretch reads MKTLLLTLVMVTIMCLDLGYT. Disulfide bonds link Cys24/Cys41, Cys34/Cys59, Cys63/Cys71, and Cys72/Cys77.

It belongs to the three-finger toxin family. Short-chain subfamily. Type III alpha-neurotoxin sub-subfamily. As to expression, expressed by the venom gland.

It is found in the secreted. Its function is as follows. Binds with high affinity to muscle nicotinic acetylcholine receptor (nAChR) and hinders acetylcholine binding to the receptor, thereby impairing neuromuscular transmission. Causes muscle paralysis, spasms and increased respiration. This is Short neurotoxin 8 from Pseudonaja textilis (Eastern brown snake).